We begin with the raw amino-acid sequence, 159 residues long: Large ribosomal subunit protein bL17 (159 aa).

Over residues 119–138 the composition is skewed to low complexity; that stretch reads PVTPKAKPAKSTAKAAPKSK. The interval 119–159 is disordered; that stretch reads PVTPKAKPAKSTAKAAPKSKAPVEETPDEPASEETAEAEAD. Residues 143-159 are compositionally biased toward acidic residues; it reads ETPDEPASEETAEAEAD.

The protein belongs to the bacterial ribosomal protein bL17 family. As to quaternary structure, part of the 50S ribosomal subunit. Contacts protein L32.

The polypeptide is Large ribosomal subunit protein bL17 (Leifsonia xyli subsp. xyli (strain CTCB07)).